The sequence spans 701 residues: Protein SOSEKI 1 (701 aa).

Residues 8–101 (LSAQVLYQLS…YVLRASELID (94 aa)) are DIX-like oligomerization domain. 4 disordered regions span residues 238–262 (STVH…FSPG), 300–329 (LPPN…SLNE), 366–389 (PYNT…YRTK), and 538–575 (IASS…LASP). A compositionally biased stretch (basic and acidic residues) spans 306 to 319 (STHEDNSFWRDSRS). The C2HC/C3H-type zinc-finger motif lies at 658–687 (ILQECSICRRTFKPDSLQVHMRGCHPPQYA). Residues Cys662, Cys665, His677, and Cys681 each contribute to the Zn(2+) site.

This sequence belongs to the SOSEKI family. As to quaternary structure, homodimer. Forms long polymer filaments with other SOKs proteins polymers crucial for polar localization and biological activity. The cofactor is Zn(2+).

It is found in the cell membrane. Functionally, SOSEKI proteins locally interpret global polarity cues and can influence cell division orientation to coordinate cell polarization relative to body axes. This is Protein SOSEKI 1 from Physcomitrium patens (Spreading-leaved earth moss).